A 160-amino-acid chain; its full sequence is Eukaryotic translation initiation factor 5A (160 aa).

Residues 1-13 are compositionally biased toward basic and acidic residues; it reads MSDSEEHHFESKA. The interval 1–22 is disordered; the sequence is MSDSEEHHFESKADAGASKTYP. The residue at position 53 (K53) is a Hypusine.

This sequence belongs to the eIF-5A family. Lys-53 undergoes hypusination, a unique post-translational modification that consists in the addition of a butylamino group from spermidine to lysine side chain, leading to the formation of the unusual amino acid hypusine. eIF-5As are the only known proteins to undergo this modification, which is essential for their function.

In terms of biological role, translation factor that promotes translation elongation and termination, particularly upon ribosome stalling at specific amino acid sequence contexts. Binds between the exit (E) and peptidyl (P) site of the ribosome and promotes rescue of stalled ribosome: specifically required for efficient translation of polyproline-containing peptides as well as other motifs that stall the ribosome. Acts as a ribosome quality control (RQC) cofactor by joining the RQC complex to facilitate peptidyl transfer during CAT tailing step. In Zea mays (Maize), this protein is Eukaryotic translation initiation factor 5A (TIF5A).